We begin with the raw amino-acid sequence, 293 residues long: Nucleotide-binding protein DvMF_0424 (293 aa).

ATP is bound at residue 13-20 (GLSGAGKS). 65–68 (DLRE) serves as a coordination point for GTP.

The protein belongs to the RapZ-like family.

Its function is as follows. Displays ATPase and GTPase activities. This is Nucleotide-binding protein DvMF_0424 from Nitratidesulfovibrio vulgaris (strain DSM 19637 / Miyazaki F) (Desulfovibrio vulgaris).